Reading from the N-terminus, the 50-residue chain is Photosystem II reaction center protein M (50 aa).

A helical membrane pass occupies residues 7–27 (GFVASLLFVGIPTIFLIGLFI).

This sequence belongs to the PsbM family. As to quaternary structure, PSII is composed of 1 copy each of membrane proteins PsbA, PsbB, PsbC, PsbD, PsbE, PsbF, PsbH, PsbI, PsbJ, PsbK, PsbL, PsbM, PsbT, PsbX, PsbY, Psb30/Ycf12, peripheral proteins PsbO, CyanoQ (PsbQ), PsbU, PsbV and a large number of cofactors. It forms dimeric complexes.

It is found in the cellular thylakoid membrane. Its function is as follows. One of the components of the core complex of photosystem II (PSII). PSII is a light-driven water:plastoquinone oxidoreductase that uses light energy to abstract electrons from H(2)O, generating O(2) and a proton gradient subsequently used for ATP formation. It consists of a core antenna complex that captures photons, and an electron transfer chain that converts photonic excitation into a charge separation. This subunit is found at the monomer-monomer interface. This chain is Photosystem II reaction center protein M, found in Prochlorococcus marinus subsp. pastoris (strain CCMP1986 / NIES-2087 / MED4).